The following is a 126-amino-acid chain: Urease subunit beta (126 aa).

This sequence belongs to the urease beta subunit family. As to quaternary structure, heterotrimer of UreA (gamma), UreB (beta) and UreC (alpha) subunits. Three heterotrimers associate to form the active enzyme.

Its subcellular location is the cytoplasm. The enzyme catalyses urea + 2 H2O + H(+) = hydrogencarbonate + 2 NH4(+). It participates in nitrogen metabolism; urea degradation; CO(2) and NH(3) from urea (urease route): step 1/1. This Frankia casuarinae (strain DSM 45818 / CECT 9043 / HFP020203 / CcI3) protein is Urease subunit beta.